The sequence spans 543 residues: Protein SGE1 (543 aa).

Residues 1–8 (MKSTLSLT) are Cytoplasmic-facing. A helical transmembrane segment spans residues 9-29 (LCVISLLLTLFLAALDIVIVV). The Extracellular portion of the chain corresponds to 30 to 41 (TLYDTIGIKFHD). The chain crosses the membrane as a helical span at residues 42–62 (FGNIGWLVTGYALSNAVFMLL). Over 63-79 (WGRLAEILGTKECLMIS) the chain is Cytoplasmic. The chain crosses the membrane as a helical span at residues 80–100 (VIVFEIGSLISALSNSMATLI). The Extracellular portion of the chain corresponds to 101-103 (SGR). A helical transmembrane segment spans residues 104-124 (VVAGFGGSGIESLAFVVGTSI). The Cytoplasmic portion of the chain corresponds to 125–131 (VRENHRG). The helical transmembrane segment at 132–152 (IMITALAISYVIAEGVGPFIG) threads the bilayer. Residues 153–162 (GAFNEHLSWR) are Extracellular-facing. A helical transmembrane segment spans residues 163–183 (WCFYINLPIGAFAFIILAFCN). Residues 184 to 227 (TSGEPHQKMWLPSKIKKIMNYDYGELLKASFWKNTFEVLVFKLD) lie on the Cytoplasmic side of the membrane. Residues 228–248 (MVGIILSSAGFTLLMLGLSFG) form a helical membrane-spanning segment. At 249-255 (GNNFPWN) the chain is on the extracellular side. The chain crosses the membrane as a helical span at residues 256–276 (SGIIICFFTVGPILLLLFCAY). Residues 277-300 (DFHFLSLSGLHYDNKRIKPLLTWN) lie on the Cytoplasmic side of the membrane. A helical membrane pass occupies residues 301 to 321 (IASNCGIFTSSITGFLSCFAY). The Extracellular segment spans residues 322 to 341 (ELQSAYLVQLYQLVFKKKPT). The chain crosses the membrane as a helical span at residues 342-362 (LASIHLWELSIPAMIATMAIA). The Cytoplasmic segment spans residues 363–373 (YLNSKYGIIKP). Residues 374–394 (AIVFGVLCGIVGSGLFTLING) form a helical membrane-spanning segment. The Extracellular segment spans residues 395–399 (ELSQS). The chain crosses the membrane as a helical span at residues 400-420 (IGYSILPGIAFGSIFQATLLS). Residues 421–443 (SQVQITSDDPDFQNKFIEVTAFN) are Cytoplasmic-facing. A helical transmembrane segment spans residues 444–464 (SFAKSLGFAFGGNMGAMIFTA). Over 465–508 (SLKNQMRSSQLNIPQFTSVETLLAYSTEHYDGPQSSLSKFINTA) the chain is Extracellular. The chain crosses the membrane as a helical span at residues 509-529 (IHDVFYCALGCYALSFFFGIF). The Cytoplasmic segment spans residues 530-543 (TSSKKTTISAKKQQ).

It belongs to the major facilitator superfamily.

It is found in the membrane. Functionally, drug export permease. Multi-copy suppressor of loss-of-function mutation of GAL11. Involved specifically in transcription of GAL4-dependent genes. Can link GAL4 with the basal transcription machinery if GAL11 is missing. Confers resistance to 10-N-nonyl acridine orange (NAO) and in general to cationic dyes. The polypeptide is Protein SGE1 (SGE1) (Saccharomyces cerevisiae (strain ATCC 204508 / S288c) (Baker's yeast)).